Reading from the N-terminus, the 521-residue chain is Protein nucleotidyltransferase YdiU (521 aa).

Residues Gly-109, Gly-111, Arg-112, Lys-131, Asp-143, Gly-144, Arg-194, and Arg-201 each contribute to the ATP site. Catalysis depends on Asp-270, which acts as the Proton acceptor. Mg(2+) is bound by residues Asn-271 and Asp-280. Asp-280 is a binding site for ATP.

It belongs to the SELO family. Requires Mg(2+) as cofactor. The cofactor is Mn(2+).

It carries out the reaction L-seryl-[protein] + ATP = 3-O-(5'-adenylyl)-L-seryl-[protein] + diphosphate. The enzyme catalyses L-threonyl-[protein] + ATP = 3-O-(5'-adenylyl)-L-threonyl-[protein] + diphosphate. It catalyses the reaction L-tyrosyl-[protein] + ATP = O-(5'-adenylyl)-L-tyrosyl-[protein] + diphosphate. The catalysed reaction is L-histidyl-[protein] + UTP = N(tele)-(5'-uridylyl)-L-histidyl-[protein] + diphosphate. It carries out the reaction L-seryl-[protein] + UTP = O-(5'-uridylyl)-L-seryl-[protein] + diphosphate. The enzyme catalyses L-tyrosyl-[protein] + UTP = O-(5'-uridylyl)-L-tyrosyl-[protein] + diphosphate. In terms of biological role, nucleotidyltransferase involved in the post-translational modification of proteins. It can catalyze the addition of adenosine monophosphate (AMP) or uridine monophosphate (UMP) to a protein, resulting in modifications known as AMPylation and UMPylation. The polypeptide is Protein nucleotidyltransferase YdiU (Burkholderia thailandensis (strain ATCC 700388 / DSM 13276 / CCUG 48851 / CIP 106301 / E264)).